Consider the following 379-residue polypeptide: Protein RecA (379 aa).

An ATP-binding site is contributed by 79-86 (GPESSGKT).

The protein belongs to the RecA family.

The protein resides in the cytoplasm. In terms of biological role, can catalyze the hydrolysis of ATP in the presence of single-stranded DNA, the ATP-dependent uptake of single-stranded DNA by duplex DNA, and the ATP-dependent hybridization of homologous single-stranded DNAs. It interacts with LexA causing its activation and leading to its autocatalytic cleavage. The chain is Protein RecA from Streptococcus agalactiae serotype III (strain NEM316).